We begin with the raw amino-acid sequence, 287 residues long: Large ribosomal subunit protein uL2 (287 aa).

The tract at residues 221-287 (RGSVMNPCDH…SKRSRGGRDS (67 aa)) is disordered. Positions 258–287 (KTRKRNKPSNRFVLRKRRRVSKRSRGGRDS) are enriched in basic residues.

This sequence belongs to the universal ribosomal protein uL2 family. As to quaternary structure, part of the 50S ribosomal subunit. Forms a bridge to the 30S subunit in the 70S ribosome.

One of the primary rRNA binding proteins. Required for association of the 30S and 50S subunits to form the 70S ribosome, for tRNA binding and peptide bond formation. It has been suggested to have peptidyltransferase activity; this is somewhat controversial. Makes several contacts with the 16S rRNA in the 70S ribosome. The protein is Large ribosomal subunit protein uL2 of Prochlorococcus marinus (strain MIT 9211).